The primary structure comprises 243 residues: Pyridoxine 5'-phosphate synthase (243 aa).

Asn7 contacts 3-amino-2-oxopropyl phosphate. Residue 9–10 (DH) coordinates 1-deoxy-D-xylulose 5-phosphate. Arg18 serves as a coordination point for 3-amino-2-oxopropyl phosphate. Residue His43 is the Proton acceptor of the active site. Residues Arg45 and His50 each coordinate 1-deoxy-D-xylulose 5-phosphate. Glu70 acts as the Proton acceptor in catalysis. A 1-deoxy-D-xylulose 5-phosphate-binding site is contributed by Thr100. The Proton donor role is filled by His192. Residues Gly193 and 215 to 216 (GF) each bind 3-amino-2-oxopropyl phosphate.

It belongs to the PNP synthase family. As to quaternary structure, homooctamer; tetramer of dimers.

The protein resides in the cytoplasm. It catalyses the reaction 3-amino-2-oxopropyl phosphate + 1-deoxy-D-xylulose 5-phosphate = pyridoxine 5'-phosphate + phosphate + 2 H2O + H(+). Its pathway is cofactor biosynthesis; pyridoxine 5'-phosphate biosynthesis; pyridoxine 5'-phosphate from D-erythrose 4-phosphate: step 5/5. Functionally, catalyzes the complicated ring closure reaction between the two acyclic compounds 1-deoxy-D-xylulose-5-phosphate (DXP) and 3-amino-2-oxopropyl phosphate (1-amino-acetone-3-phosphate or AAP) to form pyridoxine 5'-phosphate (PNP) and inorganic phosphate. The polypeptide is Pyridoxine 5'-phosphate synthase (Salinibacter ruber (strain DSM 13855 / M31)).